A 757-amino-acid polypeptide reads, in one-letter code: MSDINTESGESTSLPNSTDPPLSDVNIDVEDDDTAESISSLQPIVSNTTNPPEEPINPVLGQYHQACQKGDLATVKQLLDSGVLDLNTDLTGDITGLHWASINNRLSVVKYLISQGIDVNAKAGDLEATPLHWAARYGYVHIVDCLLNKGADPTMCDMQGFNLLHLAVNSSNVMLVAYVLFFVVAKGIIDIDCQDPKGRTPLLWAAYQGDSLSVMLLLKFGASTKIVDEGGFTPLHWATVKGQPYVLTHLIRDGADFFLKTNDGKDCFTIAQEMNTSHSFKDALSICGFNQDGYPKRKLFKKSDHAKVITFFVPLVALSIIFILFTHLHPLFALLISLIFGLAVNKALKELILPSYSNYGLHSTSLLKSPFLSGTFFGSLLLLTIVWIFKIAPFTIFKSRLLTNFFMFLILMQIYYLFIKLIFSDPGCVPIETDHENVRGTIKELLDTGKFDIKNFCLETWIRKPLRSHFSTLNTHNVARFDHFCPWIYNDIGLKNHKNFMWFILLTEVGIWFFISLTMKYFDILEDTNEDVACFLLGDDELCAGFVYDRFTFLIALWALIQSVWVGFLIVVQVFQTFTGVTNKEFNKYVKEKKNQHAFDPIFFNDTFNTTPEELRNDDDDTAASRTGNNPNHSNGTTIPSEGSRINTRKPRTCFNLCFAITGLDQVRTIVRETLGIGGANEMSRMQLLSSIPTNYGWKRNLADFWLTSDVMAPIWRRLFYSPVESRALLNGVEVDYFKLYDFPEKTYPEPTGPESV.

Polar residues-rich tracts occupy residues 1–20 (MSDINTESGESTSLPNSTDP) and 36–46 (ESISSLQPIVS). The disordered stretch occupies residues 1-54 (MSDINTESGESTSLPNSTDPPLSDVNIDVEDDDTAESISSLQPIVSNTTNPPEE). Residues 1–307 (MSDINTESGE…KLFKKSDHAK (307 aa)) are Cytoplasmic-facing. ANK repeat units lie at residues 58 to 88 (PVLGQYHQACQKGDLATVKQLLDSGVLDLNT), 92 to 121 (GDITGLHWASINNRLSVVKYLISQGIDVNA), 126 to 155 (LEATPLHWAARYGYVHIVDCLLNKGADPTM), 159 to 188 (QGFNLLHLAVNSSNVMLVAYVLFFVVAKGI), 197 to 226 (KGRTPLLWAAYQGDSLSVMLLLKFGASTKI), and 230 to 259 (GGFTPLHWATVKGQPYVLTHLIRDGADFFL). Residues 308-328 (VITFFVPLVALSIIFILFTHL) traverse the membrane as a helical segment. The Lumenal portion of the chain corresponds to 329-331 (HPL). The chain crosses the membrane as a helical span at residues 332-352 (FALLISLIFGLAVNKALKELI). Topologically, residues 353 to 375 (LPSYSNYGLHSTSLLKSPFLSGT) are cytoplasmic. Residues 376–396 (FFGSLLLLTIVWIFKIAPFTI) traverse the membrane as a helical segment. The Lumenal portion of the chain corresponds to 397–402 (FKSRLL). The helical transmembrane segment at 403–423 (TNFFMFLILMQIYYLFIKLIF) threads the bilayer. Over 424 to 498 (SDPGCVPIET…YNDIGLKNHK (75 aa)) the chain is Cytoplasmic. One can recognise a DHHC domain in the interval 455-505 (NFCLETWIRKPLRSHFSTLNTHNVARFDHFCPWIYNDIGLKNHKNFMWFIL). The active-site S-palmitoyl cysteine intermediate is the C485. A helical transmembrane segment spans residues 499 to 519 (NFMWFILLTEVGIWFFISLTM). Residues 520 to 550 (KYFDILEDTNEDVACFLLGDDELCAGFVYDR) are Lumenal-facing. A helical membrane pass occupies residues 551–571 (FTFLIALWALIQSVWVGFLIV). At 572 to 757 (VQVFQTFTGV…YPEPTGPESV (186 aa)) the chain is on the cytoplasmic side. The tract at residues 614–647 (ELRNDDDDTAASRTGNNPNHSNGTTIPSEGSRIN) is disordered. The segment covering 624–646 (ASRTGNNPNHSNGTTIPSEGSRI) has biased composition (polar residues).

The protein belongs to the DHHC palmitoyltransferase family. AKR/ZDHHC17 subfamily.

The protein resides in the early endosome membrane. The protein localises to the golgi apparatus membrane. It catalyses the reaction L-cysteinyl-[protein] + hexadecanoyl-CoA = S-hexadecanoyl-L-cysteinyl-[protein] + CoA. In terms of biological role, palmitoyltransferase specific for casein kinase 1. The protein is Palmitoyltransferase AKR1 (AKR1) of Naumovozyma castellii (Yeast).